Reading from the N-terminus, the 81-residue chain is Bacteriochlorophyll c-binding protein (81 aa).

Histidine 25 contacts a bacteriochlorophyll c.

Belongs to the BChl C/E-binding protein family.

The protein resides in the chlorosome. Its subcellular location is the chlorosome envelope. In terms of biological role, component of the photosynthetic apparatus. The light harvesting B740 complex binds bacteriochlorophyll c. The polypeptide is Bacteriochlorophyll c-binding protein (csmA) (Prosthecochloris aestuarii (strain DSM 271 / SK 413)).